We begin with the raw amino-acid sequence, 236 residues long: Ubiquinone biosynthesis O-methyltransferase (236 aa).

S-adenosyl-L-methionine contacts are provided by Arg40, Gly59, Asp80, and Leu124.

Belongs to the methyltransferase superfamily. UbiG/COQ3 family.

It catalyses the reaction a 3-demethylubiquinol + S-adenosyl-L-methionine = a ubiquinol + S-adenosyl-L-homocysteine + H(+). It carries out the reaction a 3-(all-trans-polyprenyl)benzene-1,2-diol + S-adenosyl-L-methionine = a 2-methoxy-6-(all-trans-polyprenyl)phenol + S-adenosyl-L-homocysteine + H(+). It participates in cofactor biosynthesis; ubiquinone biosynthesis. In terms of biological role, O-methyltransferase that catalyzes the 2 O-methylation steps in the ubiquinone biosynthetic pathway. The sequence is that of Ubiquinone biosynthesis O-methyltransferase from Nitrosococcus oceani (strain ATCC 19707 / BCRC 17464 / JCM 30415 / NCIMB 11848 / C-107).